We begin with the raw amino-acid sequence, 256 residues long: Thiazole synthase (256 aa).

The Schiff-base intermediate with DXP role is filled by Lys-95. 1-deoxy-D-xylulose 5-phosphate is bound by residues Gly-156, Ala-182–Gly-183, and Asn-204–Thr-205.

This sequence belongs to the ThiG family. In terms of assembly, homotetramer. Forms heterodimers with either ThiH or ThiS.

It localises to the cytoplasm. It carries out the reaction [ThiS sulfur-carrier protein]-C-terminal-Gly-aminoethanethioate + 2-iminoacetate + 1-deoxy-D-xylulose 5-phosphate = [ThiS sulfur-carrier protein]-C-terminal Gly-Gly + 2-[(2R,5Z)-2-carboxy-4-methylthiazol-5(2H)-ylidene]ethyl phosphate + 2 H2O + H(+). Its pathway is cofactor biosynthesis; thiamine diphosphate biosynthesis. Functionally, catalyzes the rearrangement of 1-deoxy-D-xylulose 5-phosphate (DXP) to produce the thiazole phosphate moiety of thiamine. Sulfur is provided by the thiocarboxylate moiety of the carrier protein ThiS. In vitro, sulfur can be provided by H(2)S. The protein is Thiazole synthase of Salmonella schwarzengrund (strain CVM19633).